We begin with the raw amino-acid sequence, 316 residues long: Large ribosomal subunit protein uL4 (316 aa).

The tract at residues 1–211 is large ribosomal subunit protein uL4; it reads MASCVVKNWQ…EQLKARWGSD (211 aa). Disordered stretches follow at residues 44-76 and 231-316; these read ARQG…ARAG and EDQA…ESDD. Residues 60–71 are compositionally biased toward basic residues; that stretch reads GGRKPWKQKGTG. The interval 212-316 is unknown; the sequence is AAPAVLETPS…TAPAEEESDD (105 aa). Low complexity predominate over residues 255–270; it reads QTPAQPEAQENQAALQ. 2 stretches are compositionally biased toward acidic residues: residues 281-291 and 301-316; these read EQTEEPQDPAE and TVEE…ESDD.

Belongs to the universal ribosomal protein uL4 family. As to quaternary structure, part of the 50S ribosomal subunit.

Its function is as follows. One of the primary rRNA binding proteins, this protein initially binds near the 5'-end of the 23S rRNA. It is important during the early stages of 50S assembly. It makes multiple contacts with different domains of the 23S rRNA in the assembled 50S subunit and ribosome. In terms of biological role, forms part of the polypeptide exit tunnel. This Synechococcus sp. (strain JA-2-3B'a(2-13)) (Cyanobacteria bacterium Yellowstone B-Prime) protein is Large ribosomal subunit protein uL4.